Consider the following 148-residue polypeptide: Lysozyme C (148 aa).

Residues 1-18 (MKVLILLGLVLLSVMVQG) form the signal peptide. In terms of domain architecture, C-type lysozyme spans 19-148 (KVFERCELAR…VSQYIQGCGV (130 aa)). 4 cysteine pairs are disulfide-bonded: C24-C146, C48-C134, C83-C99, and C95-C113. Residues E53 and D71 contribute to the active site.

This sequence belongs to the glycosyl hydrolase 22 family. As to quaternary structure, monomer.

The protein localises to the secreted. The enzyme catalyses Hydrolysis of (1-&gt;4)-beta-linkages between N-acetylmuramic acid and N-acetyl-D-glucosamine residues in a peptidoglycan and between N-acetyl-D-glucosamine residues in chitodextrins.. Lysozymes have primarily a bacteriolytic function; those in tissues and body fluids are associated with the monocyte-macrophage system and enhance the activity of immunoagents. The sequence is that of Lysozyme C (LYZ) from Saguinus oedipus (Cotton-top tamarin).